The primary structure comprises 333 residues: Foldase protein PrsA (333 aa).

Residues 1 to 22 (MKKSTKLLAGIVTLASAMTLAA) form the signal peptide. A lipid anchor (N-palmitoyl cysteine) is attached at Cys23. Cys23 carries the S-diacylglycerol cysteine lipid modification. One can recognise a PpiC domain in the interval 145–240 (TPEMTTQVIT…NKFYIVKVTK (96 aa)). Residues 301–333 (DKKASKANTSKSDQKTSSDSSKDSQSSKSKSEK) are disordered. Residues 312-322 (SDQKTSSDSSK) show a composition bias toward basic and acidic residues. The span at 323–333 (DSQSSKSKSEK) shows a compositional bias: low complexity.

The protein belongs to the PrsA family.

Its subcellular location is the cell membrane. The enzyme catalyses [protein]-peptidylproline (omega=180) = [protein]-peptidylproline (omega=0). In terms of biological role, plays a major role in protein secretion by helping the post-translocational extracellular folding of several secreted proteins. The chain is Foldase protein PrsA from Streptococcus equi subsp. zooepidemicus (strain MGCS10565).